A 116-amino-acid chain; its full sequence is Ferredoxin-thioredoxin reductase, catalytic chain (116 aa).

C57 contributes to the [4Fe-4S] cluster binding site. C59 acts as the Nucleophile in catalysis. C59 and C89 are disulfide-bonded. The [4Fe-4S] cluster site is built by C76, C78, and C87.

It belongs to the ferredoxin thioredoxin reductase beta subunit family. In terms of assembly, heterodimer of subunit A (variable subunit) and subunit B (catalytic subunit). Heterodimeric FTR forms a complex with ferredoxin and thioredoxin. [4Fe-4S] cluster is required as a cofactor.

Its subcellular location is the plastid. The protein localises to the chloroplast. It catalyses the reaction [thioredoxin]-disulfide + 2 reduced [2Fe-2S]-[ferredoxin] + 2 H(+) = [thioredoxin]-dithiol + 2 oxidized [2Fe-2S]-[ferredoxin]. Functionally, catalytic subunit of the ferredoxin-thioredoxin reductase (FTR), which catalyzes the two-electron reduction of thioredoxins by the electrons provided by reduced ferredoxin. This chain is Ferredoxin-thioredoxin reductase, catalytic chain (ftrB), found in Pyropia yezoensis (Susabi-nori).